Consider the following 200-residue polypeptide: Small ribosomal subunit protein eS8B (200 aa).

The disordered stretch occupies residues 1–41; it reads MGITRDSRHKRSATGAKRAQYRKKRKFELGRQPSNTRIGPK. A phosphoserine mark is found at Ser62 and Ser99. The interval 124 to 145 is disordered; the sequence is KGKKATATPTPKSKHVQRKHSA. The span at 135-145 shows a compositional bias: basic residues; sequence KSKHVQRKHSA. Ser150, Ser154, and Ser171 each carry phosphoserine.

This sequence belongs to the eukaryotic ribosomal protein eS8 family. In terms of assembly, component of the small ribosomal subunit (SSU). Mature yeast ribosomes consist of a small (40S) and a large (60S) subunit. The 40S small subunit contains 1 molecule of ribosomal RNA (18S rRNA) and at least 33 different proteins. The large 60S subunit contains 3 rRNA molecules (25S, 5.8S and 5S rRNA) and at least 46 different proteins.

It is found in the cytoplasm. Its function is as follows. Component of the ribosome, a large ribonucleoprotein complex responsible for the synthesis of proteins in the cell. The small ribosomal subunit (SSU) binds messenger RNAs (mRNAs) and translates the encoded message by selecting cognate aminoacyl-transfer RNA (tRNA) molecules. The large subunit (LSU) contains the ribosomal catalytic site termed the peptidyl transferase center (PTC), which catalyzes the formation of peptide bonds, thereby polymerizing the amino acids delivered by tRNAs into a polypeptide chain. The nascent polypeptides leave the ribosome through a tunnel in the LSU and interact with protein factors that function in enzymatic processing, targeting, and the membrane insertion of nascent chains at the exit of the ribosomal tunnel. The sequence is that of Small ribosomal subunit protein eS8B (rps802) from Schizosaccharomyces pombe (strain 972 / ATCC 24843) (Fission yeast).